The chain runs to 212 residues: MSNIDLSASSNLNVENTLVPMVVEQTARGERSYDIYSRLLKERVIFLVGQVEDHMANLVVAQMLFLEAENPDKDIHLYINSPGGSVTAGLSIYDTMQFIKPDVSTMCIGQACSMGAFLLTAGAKGKRFCLPNARTMIHQPSGGAQGQASDIHIQAQEILKLRERLNEIMAGHTGRGVEEIARDTERDRFMSAHESVEYGLIDKVLERRVGGE.

Ser-113 serves as the catalytic Nucleophile. The active site involves His-138.

The protein belongs to the peptidase S14 family. In terms of assembly, fourteen ClpP subunits assemble into 2 heptameric rings which stack back to back to give a disk-like structure with a central cavity, resembling the structure of eukaryotic proteasomes.

The protein localises to the cytoplasm. It catalyses the reaction Hydrolysis of proteins to small peptides in the presence of ATP and magnesium. alpha-casein is the usual test substrate. In the absence of ATP, only oligopeptides shorter than five residues are hydrolyzed (such as succinyl-Leu-Tyr-|-NHMec, and Leu-Tyr-Leu-|-Tyr-Trp, in which cleavage of the -Tyr-|-Leu- and -Tyr-|-Trp bonds also occurs).. Functionally, cleaves peptides in various proteins in a process that requires ATP hydrolysis. Has a chymotrypsin-like activity. Plays a major role in the degradation of misfolded proteins. This is ATP-dependent Clp protease proteolytic subunit from Saccharophagus degradans (strain 2-40 / ATCC 43961 / DSM 17024).